The sequence spans 410 residues: 2-oxoglutarate-dependent dioxygenase AOP3 (410 aa).

One can recognise a Fe2OG dioxygenase domain in the interval 258–355 (GNASVGAKEA…RYAAALFSYP (98 aa)). Residues His-278, Asp-280, and His-335 each contribute to the Fe cation site. Arg-346 is a 2-oxoglutarate binding site.

It belongs to the iron/ascorbate-dependent oxidoreductase family. The cofactor is Fe(2+).

Functionally, 2-oxoglutarate-dependent dioxygenase involved in glucosinolates biosynthesis. Catalyzes the conversion of methylsulfinylalkyl glucosinolates to hydroxyalkyl glucosinolates. In Arabidopsis thaliana (Mouse-ear cress), this protein is 2-oxoglutarate-dependent dioxygenase AOP3 (AOP3).